Consider the following 131-residue polypeptide: Peptide methionine sulfoxide reductase MsrB (131 aa).

Positions 9–131 constitute a MsrB domain; it reads DEDWKKELTP…NSASLKFQKE (123 aa). Zn(2+) contacts are provided by Cys-48, Cys-51, Cys-97, and Cys-100. The active-site Nucleophile is the Cys-120.

It belongs to the MsrB Met sulfoxide reductase family. The cofactor is Zn(2+).

It carries out the reaction L-methionyl-[protein] + [thioredoxin]-disulfide + H2O = L-methionyl-(R)-S-oxide-[protein] + [thioredoxin]-dithiol. This is Peptide methionine sulfoxide reductase MsrB from Leptospira interrogans serogroup Icterohaemorrhagiae serovar Lai (strain 56601).